Reading from the N-terminus, the 440-residue chain is Glutamate-1-semialdehyde 2,1-aminomutase (440 aa).

Lys271 carries the N6-(pyridoxal phosphate)lysine modification.

Belongs to the class-III pyridoxal-phosphate-dependent aminotransferase family. HemL subfamily. Homodimer. The cofactor is pyridoxal 5'-phosphate.

It is found in the cytoplasm. The catalysed reaction is (S)-4-amino-5-oxopentanoate = 5-aminolevulinate. It participates in porphyrin-containing compound metabolism; protoporphyrin-IX biosynthesis; 5-aminolevulinate from L-glutamyl-tRNA(Glu): step 2/2. The protein is Glutamate-1-semialdehyde 2,1-aminomutase of Chlamydia pneumoniae (Chlamydophila pneumoniae).